Consider the following 287-residue polypeptide: ATP synthase gamma chain (287 aa).

It belongs to the ATPase gamma chain family. F-type ATPases have 2 components, CF(1) - the catalytic core - and CF(0) - the membrane proton channel. CF(1) has five subunits: alpha(3), beta(3), gamma(1), delta(1), epsilon(1). CF(0) has three main subunits: a, b and c.

It is found in the cell inner membrane. Functionally, produces ATP from ADP in the presence of a proton gradient across the membrane. The gamma chain is believed to be important in regulating ATPase activity and the flow of protons through the CF(0) complex. The protein is ATP synthase gamma chain of Hahella chejuensis (strain KCTC 2396).